The primary structure comprises 246 residues: tRNA pseudouridine synthase A (246 aa).

Asp-52 functions as the Nucleophile in the catalytic mechanism. Tyr-111 is a substrate binding site.

Belongs to the tRNA pseudouridine synthase TruA family. In terms of assembly, homodimer.

The catalysed reaction is uridine(38/39/40) in tRNA = pseudouridine(38/39/40) in tRNA. Functionally, formation of pseudouridine at positions 38, 39 and 40 in the anticodon stem and loop of transfer RNAs. This is tRNA pseudouridine synthase A from Rhodopseudomonas palustris (strain BisA53).